The following is a 145-amino-acid chain: D-aminoacyl-tRNA deacylase (145 aa).

Positions 137–138 match the Gly-cisPro motif, important for rejection of L-amino acids motif; sequence GP.

This sequence belongs to the DTD family. Homodimer.

The protein localises to the cytoplasm. The catalysed reaction is glycyl-tRNA(Ala) + H2O = tRNA(Ala) + glycine + H(+). It carries out the reaction a D-aminoacyl-tRNA + H2O = a tRNA + a D-alpha-amino acid + H(+). Its function is as follows. An aminoacyl-tRNA editing enzyme that deacylates mischarged D-aminoacyl-tRNAs. Also deacylates mischarged glycyl-tRNA(Ala), protecting cells against glycine mischarging by AlaRS. Acts via tRNA-based rather than protein-based catalysis; rejects L-amino acids rather than detecting D-amino acids in the active site. By recycling D-aminoacyl-tRNA to D-amino acids and free tRNA molecules, this enzyme counteracts the toxicity associated with the formation of D-aminoacyl-tRNA entities in vivo and helps enforce protein L-homochirality. The sequence is that of D-aminoacyl-tRNA deacylase from Saccharophagus degradans (strain 2-40 / ATCC 43961 / DSM 17024).